Reading from the N-terminus, the 426-residue chain is uncharacterized protein (426 aa).

This is an uncharacterized protein from Acidianus filamentous virus 1 (isolate United States/Yellowstone) (AFV-1).